We begin with the raw amino-acid sequence, 87 residues long: Conotoxin Bt15a (87 aa).

The N-terminal stretch at 1–23 (MEKLTILVLVATVLLAIQVLVQS) is a signal peptide. A propeptide spanning residues 24–49 (DGEKPLKRRVKQYAAKRLSALMRGPR) is cleaved from the precursor. A Pyrrolidone carboxylic acid modification is found at glutamine 50.

Belongs to the conotoxin O2 superfamily. Post-translationally, contains 4 disulfide bonds. Expressed by the venom duct.

Its subcellular location is the secreted. This Conus betulinus (Beech cone) protein is Conotoxin Bt15a.